Here is a 215-residue protein sequence, read N- to C-terminus: Pyridoxine/pyridoxamine 5'-phosphate oxidase (215 aa).

Substrate contacts are provided by residues 9 to 12 (RKEY) and Lys-67. FMN is bound by residues 62-67 (RIVLLK), 77-78 (YT), Lys-84, and Gln-106. Tyr-124, Arg-128, and Ser-132 together coordinate substrate. FMN is bound by residues 141-142 (QS) and Trp-187. 193–195 (RLH) contributes to the substrate binding site. Residue Arg-197 participates in FMN binding.

Belongs to the pyridoxamine 5'-phosphate oxidase family. In terms of assembly, homodimer. The cofactor is FMN.

It carries out the reaction pyridoxamine 5'-phosphate + O2 + H2O = pyridoxal 5'-phosphate + H2O2 + NH4(+). The catalysed reaction is pyridoxine 5'-phosphate + O2 = pyridoxal 5'-phosphate + H2O2. It functions in the pathway cofactor metabolism; pyridoxal 5'-phosphate salvage; pyridoxal 5'-phosphate from pyridoxamine 5'-phosphate: step 1/1. It participates in cofactor metabolism; pyridoxal 5'-phosphate salvage; pyridoxal 5'-phosphate from pyridoxine 5'-phosphate: step 1/1. In terms of biological role, catalyzes the oxidation of either pyridoxine 5'-phosphate (PNP) or pyridoxamine 5'-phosphate (PMP) into pyridoxal 5'-phosphate (PLP). This Cytophaga hutchinsonii (strain ATCC 33406 / DSM 1761 / CIP 103989 / NBRC 15051 / NCIMB 9469 / D465) protein is Pyridoxine/pyridoxamine 5'-phosphate oxidase.